The chain runs to 778 residues: Zinc finger protein 749 (778 aa).

In terms of domain architecture, KRAB spans 8–101; sequence MVFEDVAIYF…ILKDILHLAE (94 aa). The C2H2-type 1; degenerate zinc finger occupies 152 to 174; sequence FTCTQGGKDFTASSDLLQQQVLN. The C2H2-type 2; degenerate zinc finger occupies 196–218; it reads FNSSQGGKDFCHQHGLFEHQKTH. The C2H2-type 3; degenerate zinc-finger motif lies at 224–246; it reads YEFSECGELFRYNSNLIKYQQNH. A C2H2-type 4; degenerate zinc finger spans residues 252-274; that stretch reads YEGTEYGKTFIRKSNLVQHQKIH. C2H2-type zinc fingers lie at residues 298–320, 326–348, 354–376, 382–404, 410–432, and 438–460; these read YECT…QKTH, YECN…QKVH, YECS…QRVH, FECS…QRVH, YKCS…LKIH, and YECT…QKIH. Lysine 466 carries the N6-acetyllysine modification. 2 C2H2-type zinc fingers span residues 483-505 and 511-533; these read YTCS…QKIH and YECT…EKIH. Lysine 539 is subject to N6-acetyllysine. The segment at 556 to 578 adopts a C2H2-type 13; degenerate zinc-finger fold; sequence YVCSECGKAFLTQAHLDGHQKIQ. 3 consecutive C2H2-type zinc fingers follow at residues 584-606, 612-634, and 640-662; these read YECN…QRIH, YKCS…QKVH, and YECS…QRVH. The C2H2-type 17; atypical zinc-finger motif lies at 668–690; that stretch reads YECSNCGKFLRYRSTFIKHHKVC. Residues 696 to 718 form a C2H2-type 18 zinc finger; the sequence is HECSKCRELFRTKSSLIIHQQSH. The C2H2-type 19; degenerate zinc-finger motif lies at 751 to 773; it reads YECGESSKVFKYNSSLIKHQIIH. Glycyl lysine isopeptide (Lys-Gly) (interchain with G-Cter in SUMO2) cross-links involve residues lysine 761 and lysine 768.

Belongs to the krueppel C2H2-type zinc-finger protein family.

It is found in the nucleus. Functionally, may be involved in transcriptional regulation. This is Zinc finger protein 749 (ZNF749) from Homo sapiens (Human).